A 220-amino-acid chain; its full sequence is Kinetochore protein Spc25 (220 aa).

Positions 79-114 (HLTQEVEAIKLRNLAMKDQIKQQKMLNNQRKNEIME) form a coiled coil.

The protein belongs to the SPC25 family. In terms of assembly, component of the Ndc80 complex, which is composed of Ndc80, Nuf2 and Spc25.

The protein resides in the nucleus. It localises to the chromosome. Its subcellular location is the centromere. The protein localises to the kinetochore. Acts as a component of the essential kinetochore-associated Ndc80 complex, which is required for chromosome segregation and spindle checkpoint activity during meiosis and mitosis. Required for kinetochore integrity and the organization of stable microtubule binding sites in the outer plate of the kinetochore. Participates in SAC signaling that responds specifically to disruptions in spindle microtubule dynamics. The NDC80 complex synergistically enhances the affinity of the SKA1 complex for microtubules and may allow the NDC80 complex to track depolymerizing microtubules. The protein is Kinetochore protein Spc25 of Drosophila orena (Fruit fly).